The primary structure comprises 1001 residues: Chloride channel protein clh-3 (1001 aa).

Over 1 to 48 the chain is Cytoplasmic; that stretch reads MGIGTKILSKIEKNKTSDGLTIPLTPTTQKQSSSWCSFESIKTFFRTV. The next 2 membrane-spanning stretches (helical) occupy residues 49–85 and 91–117; these read IRDW…RLFD and HFTL…AHYI. Positions 123 to 127 match the Selectivity filter part_1 motif; sequence GSGIP. S124 lines the chloride pocket. An intramembrane region (helical) is located at residues 126-133; the sequence is IPEMKTIL. Helical transmembrane passes span 142–160 and 167–185; these read LSVR…SLGS and EGPF…TRLV. Positions 165 to 169 match the Selectivity filter part_2 motif; that stretch reads GKEGP. 2 intramembrane regions (helical) span residues 202–214 and 218–226; these read MLAA…VACT and PIGGVLFSI. 5 helical membrane passes run 238–258, 285–313, 322–341, 405–425, and 433–456; these read YWRG…LRMF, LPIF…VLFL, IFQK…ISSL, YSPF…AILA, and GIFM…VFSL. Residues 433 to 437 carry the Selectivity filter part_3 motif; sequence GIFMP. 2 residues coordinate chloride: I434 and F435. Residues 473 to 487 constitute an intramembrane region (helical); it reads GVYAVVGAAAFCGAV. Residues 488-489 constitute an intramembrane region (note=Loop between two helices); sequence TH. The segment at residues 490–501 is an intramembrane region (helical); sequence TVSVAVIVFELT. Positions 502–506 form an intramembrane region, note=Loop between two helices; that stretch reads GQLCH. A helical membrane pass occupies residues 507–524; that stretch reads LLPVMIAVLIANAVASYL. Topologically, residues 525–1001 are cytoplasmic; that stretch reads QPSIYDSIIR…LPDDVHDEKF (477 aa). A chloride-binding site is contributed by Y529. The CBS 1 domain maps to 560-619; sequence MISPLVYIAKDSTVGDIKRALETKTRIRAFPLVENMESLALVGSVSRSQLQRYVDSQIGT. The stretch at 625-657 forms a coiled coil; that stretch reads EATRRIKQRLEDEESERKRREESKSDDTEDSLE. A compositionally biased stretch (basic and acidic residues) spans 634-650; the sequence is LEDEESERKRREESKSD. Residues 634–662 are disordered; that stretch reads LEDEESERKRREESKSDDTEDSLETTGAG. S742 and S747 each carry phosphoserine; by gck-3. In terms of domain architecture, CBS 2 spans 788-845; the sequence is IDSTPFQLSEYTSLFKAHSLFSLLGLNRAYVTKKGQLIGVVALKELRLAIEYLQSGKV.

This sequence belongs to the chloride channel (TC 2.A.49) family. As to quaternary structure, isoform a interacts (via RFLI motif) with gck-3 (via C-terminus). Post-translationally, phosphorylated by gck-3; phosphorylation at both Ser-742 and Ser-747 is required to inhibit channel activity. Dephosphorylated by gsp-1/2 during cell swelling and oocyte meiotic maturation, which results in channel activation. In terms of tissue distribution, expressed in excretory cell, 4 anterior epithelial cells of the intestine, hermaphrodite-specific neurons and enteric muscles. Expressed also in vulva and uterus. Isoform a is expressed in oocytes (at protein level).

The protein resides in the cell membrane. Voltage-gated chloride channel. Insensitive to depolarizing conditioning voltages, requires low voltages for activation, insensitive to chloride levels and has a mild sensitivity to low pH. Channel gating properties are conferred by the cytoplasmic C-terminus. Plays a role in egg laying by modulating hermaphrodite-specific neurons (HSN) excitability and the ovulatory contractions of gap-junction-coupled gonadal sheath cells. When active, may prevent tubular formation of the excretory canals. Activated during oocyte meiotic maturation and by membrane hyperpolarization and cell swelling. Inhibited by Zn(2+) and to a lesser extent by Cd(2+). In terms of biological role, voltage-gated chloride channel. Sensitive to depolarizing conditioning voltages, requires stronger voltages for activation and activation is slower, is inhibited by low concentrations of chloride and is activated by low pH. Channel gating properties are conferred by the cytoplasmic C-terminus. The chain is Chloride channel protein clh-3 from Caenorhabditis elegans.